Here is a 572-residue protein sequence, read N- to C-terminus: Urease subunit alpha (572 aa).

Positions 136–572 (GGIDTHIHFI…VPLGQRYFLF (437 aa)) constitute a Urease domain. Ni(2+) is bound by residues His141, His143, and Lys224. N6-carboxylysine is present on Lys224. His226 contributes to the substrate binding site. His253 and His279 together coordinate Ni(2+). Catalysis depends on His327, which acts as the Proton donor. Asp367 lines the Ni(2+) pocket.

Belongs to the metallo-dependent hydrolases superfamily. Urease alpha subunit family. Heterotrimer of UreA (gamma), UreB (beta) and UreC (alpha) subunits. Three heterotrimers associate to form the active enzyme. Ni cation serves as cofactor. In terms of processing, carboxylation allows a single lysine to coordinate two nickel ions.

The protein localises to the cytoplasm. It catalyses the reaction urea + 2 H2O + H(+) = hydrogencarbonate + 2 NH4(+). It functions in the pathway nitrogen metabolism; urea degradation; CO(2) and NH(3) from urea (urease route): step 1/1. The chain is Urease subunit alpha from Haemophilus influenzae (strain 86-028NP).